Consider the following 443-residue polypeptide: ATP-dependent protease ATPase subunit HslU (443 aa).

ATP-binding positions include Ile18 and 60 to 65; that span reads GVGKTE. The disordered stretch occupies residues 138-158; that stretch reads PAENQWGEKEQNEDKGTRQTF. A compositionally biased stretch (basic and acidic residues) spans 143 to 154; that stretch reads WGEKEQNEDKGT. Positions 255, 321, and 393 each coordinate ATP.

It belongs to the ClpX chaperone family. HslU subfamily. In terms of assembly, a double ring-shaped homohexamer of HslV is capped on each side by a ring-shaped HslU homohexamer. The assembly of the HslU/HslV complex is dependent on binding of ATP.

The protein localises to the cytoplasm. Its function is as follows. ATPase subunit of a proteasome-like degradation complex; this subunit has chaperone activity. The binding of ATP and its subsequent hydrolysis by HslU are essential for unfolding of protein substrates subsequently hydrolyzed by HslV. HslU recognizes the N-terminal part of its protein substrates and unfolds these before they are guided to HslV for hydrolysis. The protein is ATP-dependent protease ATPase subunit HslU of Pseudoalteromonas atlantica (strain T6c / ATCC BAA-1087).